A 136-amino-acid chain; its full sequence is Translation initiation factor 5A (136 aa).

Lys-37 carries the post-translational modification Hypusine.

The protein belongs to the eIF-5A family.

It is found in the cytoplasm. Its function is as follows. Functions by promoting the formation of the first peptide bond. This is Translation initiation factor 5A (eIF5A) from Thermococcus onnurineus (strain NA1).